The following is a 404-amino-acid chain: tRNA pseudouridine(31) synthase (404 aa).

Asp-168 is an active-site residue.

Belongs to the pseudouridine synthase RluA family.

It is found in the cytoplasm. It localises to the mitochondrion. The catalysed reaction is uridine(31) in tRNA = pseudouridine(31) in tRNA. In terms of biological role, catalyzes the formation of pseudouridine at position 31 in the psi GC loop of tRNAS. The protein is tRNA pseudouridine(31) synthase (PUS6) of Saccharomyces cerevisiae (strain ATCC 204508 / S288c) (Baker's yeast).